Here is a 465-residue protein sequence, read N- to C-terminus: Hepatocyte nuclear factor 6 (465 aa).

Disordered stretches follow at residues 15–84 and 119–141; these read GVSH…GPLH and SDKF…HQRL. Residues 123–140 show a composition bias toward basic residues; it reads PHHHHHHHHHHHPHHHQR. The segment at residues 283 to 369 is a DNA-binding region (CUT); it reads GSNSGQMEEI…QRMSALRLAA (87 aa). Residues 385–444 constitute a DNA-binding region (homeobox); sequence PKKPRLVFTDVQRRTLHAIFKENKRPSKELQITISQQLGLELSTVSNFFMNARRRSLDKW. The segment at 442-465 is disordered; that stretch reads DKWQDEGSSNSGNSSSSSSTCTKA. The segment covering 448–465 has biased composition (low complexity); the sequence is GSSNSGNSSSSSSTCTKA.

Belongs to the CUT homeobox family. Binds DNA as a monomer. Expressed in liver, brain, spleen and testis.

It is found in the nucleus. Functionally, transcriptional activator. Binds the consensus sequence 5'-DHWATTGAYTWWD-3' on a variety of gene promoters such as those of HNF3B and TTR. Important for liver genes transcription. The affinity of HNF-6-alpha and HNF-6-beta for DNA differs depending on the target sequence. The protein is Hepatocyte nuclear factor 6 (Onecut1) of Rattus norvegicus (Rat).